We begin with the raw amino-acid sequence, 309 residues long: Manganese-dependent inorganic pyrophosphatase (309 aa).

Residues histidine 9, aspartate 13, aspartate 15, aspartate 75, histidine 97, and aspartate 149 each coordinate Mn(2+).

In terms of assembly, homodimer. Mn(2+) is required as a cofactor.

Its subcellular location is the cytoplasm. The enzyme catalyses diphosphate + H2O = 2 phosphate + H(+). The chain is Manganese-dependent inorganic pyrophosphatase (ppaC) from Bacillus subtilis (strain 168).